Reading from the N-terminus, the 243-residue chain is Transmembrane protein 174 (243 aa).

A run of 2 helical transmembrane segments spans residues 40–60 (LLFS…MGWI) and 73–93 (LLGP…VCKF).

Interacts with SLC34A1; regulates SLC34A1 internalization by PTH and FGF23. As to expression, kidney specific. Expressed in renal primary proximal tubule cells.

Its subcellular location is the endoplasmic reticulum membrane. It is found in the apical cell membrane. Functionally, regulator of plasma phosphate homeostasis. Decreases serum inorganic phosphate (Pi) uptake by regulating the sodium-phosphate cotransporter SLC34A1 trafficking by PTH and FGF23 in the kidney. This chain is Transmembrane protein 174 (Tmem174), found in Mus musculus (Mouse).